Here is a 706-residue protein sequence, read N- to C-terminus: UvrABC system protein C (706 aa).

Residues 16–95 form the GIY-YIG domain; it reads VEPGVYRFRD…IKEFDPRFNV (80 aa). Positions 208–243 constitute a UVR domain; it reads DRLAKDMEQQMTAAAEQLDFERAARLRDDISALKRA. The tract at residues 651-706 is disordered; the sequence is APQNGTAPDPAPGTGDPQTPADPHSAATAADIEDDRHATGATGPQMNGSEQQVDRV. Residues 692–706 are compositionally biased toward polar residues; sequence TGPQMNGSEQQVDRV.

The protein belongs to the UvrC family. In terms of assembly, interacts with UvrB in an incision complex.

The protein localises to the cytoplasm. Functionally, the UvrABC repair system catalyzes the recognition and processing of DNA lesions. UvrC both incises the 5' and 3' sides of the lesion. The N-terminal half is responsible for the 3' incision and the C-terminal half is responsible for the 5' incision. This chain is UvrABC system protein C, found in Mycolicibacterium smegmatis (strain ATCC 700084 / mc(2)155) (Mycobacterium smegmatis).